Reading from the N-terminus, the 210-residue chain is MTENVQLGALLAACHWIGEKGWCPATGGNMSLRLDSAQCLVTESGKDKGSLTADDFLLVETANNHVPSGRTPSAETGLHTLLYRLYPEINAVLHTHSVNATVLSRVERSNELVLHGYEMQKSLSGQRSHLDSVVIPIFDNDQDIPALAQRVAALADNHPLRYGFLVRGHGLYCWGNSVSEARRHLEGLEFLFQCELQRRLLDANFKLGAK.

Zn(2+) is bound by residues His94 and His96.

Belongs to the aldolase class II family. MtnB subfamily. The cofactor is Zn(2+).

It catalyses the reaction 5-(methylsulfanyl)-D-ribulose 1-phosphate = 5-methylsulfanyl-2,3-dioxopentyl phosphate + H2O. It participates in amino-acid biosynthesis; L-methionine biosynthesis via salvage pathway; L-methionine from S-methyl-5-thio-alpha-D-ribose 1-phosphate: step 2/6. Its function is as follows. Catalyzes the dehydration of methylthioribulose-1-phosphate (MTRu-1-P) into 2,3-diketo-5-methylthiopentyl-1-phosphate (DK-MTP-1-P). This chain is Methylthioribulose-1-phosphate dehydratase, found in Yersinia enterocolitica serotype O:8 / biotype 1B (strain NCTC 13174 / 8081).